A 394-amino-acid polypeptide reads, in one-letter code: Elongation factor Tu (394 aa).

The tr-type G domain maps to 10–204 (KPHVNVGTIG…AVDSYIPQPE (195 aa)). The interval 19 to 26 (GHVDHGKT) is G1. 19-26 (GHVDHGKT) serves as a coordination point for GTP. Thr26 is a binding site for Mg(2+). The segment at 60-64 (GITIS) is G2. Positions 81–84 (DCPG) are G3. Residues 81-85 (DCPGH) and 136-139 (NKCD) each bind GTP. Residues 136 to 139 (NKCD) are G4. The segment at 174-176 (SAV) is G5.

The protein belongs to the TRAFAC class translation factor GTPase superfamily. Classic translation factor GTPase family. EF-Tu/EF-1A subfamily. Monomer.

The protein localises to the cytoplasm. The catalysed reaction is GTP + H2O = GDP + phosphate + H(+). Functionally, GTP hydrolase that promotes the GTP-dependent binding of aminoacyl-tRNA to the A-site of ribosomes during protein biosynthesis. In Akkermansia muciniphila (strain ATCC BAA-835 / DSM 22959 / JCM 33894 / BCRC 81048 / CCUG 64013 / CIP 107961 / Muc), this protein is Elongation factor Tu.